Here is a 90-residue protein sequence, read N- to C-terminus: Cell division topological specificity factor (90 aa).

It belongs to the MinE family.

In terms of biological role, prevents the cell division inhibition by proteins MinC and MinD at internal division sites while permitting inhibition at polar sites. This ensures cell division at the proper site by restricting the formation of a division septum at the midpoint of the long axis of the cell. This chain is Cell division topological specificity factor, found in Brucella abortus (strain S19).